The chain runs to 394 residues: Probable fimbrial assembly protein FimD, serogroup H1 (394 aa).

This chain is Probable fimbrial assembly protein FimD, serogroup H1 (fimD), found in Dichelobacter nodosus (Bacteroides nodosus).